A 285-amino-acid polypeptide reads, in one-letter code: Type II restriction enzyme Cfr10I (285 aa).

The Mg(2+) site is built by Asp134 and Glu204.

In terms of assembly, homodimer. Mg(2+) is required as a cofactor.

The enzyme catalyses Endonucleolytic cleavage of DNA to give specific double-stranded fragments with terminal 5'-phosphates.. In terms of biological role, an F and P subtype restriction enzyme that recognizes the double-stranded sequence 5'-RCCGGY-3' and cleaves after R-1. The chain is Type II restriction enzyme Cfr10I (cfr10IR) from Citrobacter freundii.